Here is a 336-residue protein sequence, read N- to C-terminus: Ornithine carbamoyltransferase (336 aa).

Carbamoyl phosphate-binding positions include 56 to 59, Gln83, Arg107, and 134 to 137; these read STRT and HPTQ. Residues Asn168, Asp232, and 236 to 237 each bind L-ornithine; that span reads SM. Carbamoyl phosphate is bound by residues 274–275 and Arg320; that span reads CL.

Belongs to the aspartate/ornithine carbamoyltransferase superfamily. OTCase family.

The protein localises to the cytoplasm. The enzyme catalyses carbamoyl phosphate + L-ornithine = L-citrulline + phosphate + H(+). The protein operates within amino-acid biosynthesis; L-arginine biosynthesis; L-arginine from L-ornithine and carbamoyl phosphate: step 1/3. Functionally, reversibly catalyzes the transfer of the carbamoyl group from carbamoyl phosphate (CP) to the N(epsilon) atom of ornithine (ORN) to produce L-citrulline. This chain is Ornithine carbamoyltransferase, found in Erwinia tasmaniensis (strain DSM 17950 / CFBP 7177 / CIP 109463 / NCPPB 4357 / Et1/99).